The chain runs to 667 residues: Probable Na(+)/H(+) antiporter nhx-9 (667 aa).

Helical transmembrane passes span 41 to 61 (VYVI…FNLM), 73 to 93 (LLII…LSGA), 97 to 117 (SHTF…YFMP), 128 to 148 (VLVF…GSLL), 165 to 185 (ILVF…AVFE), 192 to 212 (FLFI…VVLY), 236 to 256 (LSFF…AIAA), and 268 to 288 (ILAP…AEMV). Asparagine 310 carries an N-linked (GlcNAc...) asparagine glycan. Helical transmembrane passes span 325–345 (MLAQ…TISS), 351–371 (LYFI…GIVV), 390–410 (FIMS…VSIP), and 418–438 (MFIT…GITI). The disordered stretch occupies residues 637-667 (TEQLPSETPFHSGRRQSTGDLNATRRADFNV). A Phosphothreonine modification is found at threonine 644.

It belongs to the monovalent cation:proton antiporter 1 (CPA1) transporter (TC 2.A.36) family. Post-translationally, phosphorylated. In early stage larva, expressed in the twin excretory cell processes. At later larval stages, expression is more restricted, resulting in a 'beads on a chain' appearance.

The protein resides in the cell membrane. Functionally, serves some physiological function other than regulation of cellular pH. This is Probable Na(+)/H(+) antiporter nhx-9 (nhx-9) from Caenorhabditis elegans.